Here is a 241-residue protein sequence, read N- to C-terminus: Methylosome subunit pICln (241 aa).

Positions 88–112 are disordered; that stretch reads EDKEAHMADQEEEESEDDDDDEEPI. The span at 97–112 shows a compositional bias: acidic residues; it reads QEEEESEDDDDDEEPI.

It belongs to the pICln (TC 1.A.47) family. As to quaternary structure, component of the methylosome, a 20S complex containing at least clns1a/picln, prmt5/skb1 and wdr77/mep50; may mediate snrpd1 and snrpd3 methylation. Forms a 6S pICln-Sm complex composed of clns1a/picln, snrpd1, snrpd2, snrpe, snrpf and snrpg; ring-like structure where clns1a/pICln mimics additional Sm proteins and which is unable to assemble into the core snRNP.

The protein resides in the cytoplasm. It localises to the cytosol. Its subcellular location is the nucleus. The protein localises to the cytoskeleton. Functionally, involved in both the assembly of spliceosomal snRNPs and the methylation of Sm proteins. Chaperone that regulates the assembly of spliceosomal U1, U2, U4 and U5 small nuclear ribonucleoproteins (snRNPs), the building blocks of the spliceosome, and thereby plays an important role in the splicing of cellular pre-mRNAs. Most spliceosomal snRNPs contain a common set of Sm proteins SNRPB, SNRPD1, SNRPD2, SNRPD3, SNRPE, SNRPF and SNRPG that assemble in a heptameric protein ring on the Sm site of the small nuclear RNA to form the core snRNP (Sm core). In the cytosol, the Sm proteins SNRPD1, SNRPD2, SNRPE, SNRPF and SNRPG are trapped in an inactive 6S pICln-Sm complex by the chaperone CLNS1A that controls the assembly of the core snRNP. Dissociation by the SMN complex of CLNS1A from the trapped Sm proteins and their transfer to an SMN-Sm complex triggers the assembly of core snRNPs and their transport to the nucleus. In Xenopus laevis (African clawed frog), this protein is Methylosome subunit pICln (clns1a).